Here is a 190-residue protein sequence, read N- to C-terminus: Flavodoxin-like domain-containing protein BilS (190 aa).

Its pathway is porphyrin-containing compound metabolism; protoheme degradation. Together with BilR, catalyzes reduction of mesobilirubin and/or bilirubin to urobilinogen, a key step during heme degradation. BilS is probably involved in electron transfer for the bilirubin reductase BilR. The protein is Flavodoxin-like domain-containing protein BilS of Clostridium symbiosum (strain WAL-14163).